A 502-amino-acid polypeptide reads, in one-letter code: UDP-N-acetylmuramoylalanine--D-glutamate ligase (502 aa).

An ATP-binding site is contributed by 136 to 142 (GTNGKTT).

This sequence belongs to the MurCDEF family.

It is found in the cytoplasm. The enzyme catalyses UDP-N-acetyl-alpha-D-muramoyl-L-alanine + D-glutamate + ATP = UDP-N-acetyl-alpha-D-muramoyl-L-alanyl-D-glutamate + ADP + phosphate + H(+). Its pathway is cell wall biogenesis; peptidoglycan biosynthesis. Functionally, cell wall formation. Catalyzes the addition of glutamate to the nucleotide precursor UDP-N-acetylmuramoyl-L-alanine (UMA). This is UDP-N-acetylmuramoylalanine--D-glutamate ligase from Corynebacterium jeikeium (strain K411).